The primary structure comprises 659 residues: DNA ligase (659 aa).

NAD(+) is bound by residues 31–35 (DFVYD), 80–81 (SL), and E109. K111 serves as the catalytic N6-AMP-lysine intermediate. Positions 132, 166, 281, and 305 each coordinate NAD(+). Zn(2+) contacts are provided by C398, C401, C416, and C421. The BRCT domain maps to 581 to 659 (VTTHPFNGKT…EATFKVKINE (79 aa)).

The protein belongs to the NAD-dependent DNA ligase family. LigA subfamily. Mg(2+) is required as a cofactor. The cofactor is Mn(2+).

It carries out the reaction NAD(+) + (deoxyribonucleotide)n-3'-hydroxyl + 5'-phospho-(deoxyribonucleotide)m = (deoxyribonucleotide)n+m + AMP + beta-nicotinamide D-nucleotide.. Its function is as follows. DNA ligase that catalyzes the formation of phosphodiester linkages between 5'-phosphoryl and 3'-hydroxyl groups in double-stranded DNA using NAD as a coenzyme and as the energy source for the reaction. It is essential for DNA replication and repair of damaged DNA. The protein is DNA ligase of Acholeplasma laidlawii (strain PG-8A).